Reading from the N-terminus, the 343-residue chain is Heat-inducible transcription repressor HrcA (343 aa).

Belongs to the HrcA family.

Its function is as follows. Negative regulator of class I heat shock genes (grpE-dnaK-dnaJ and groELS operons). Prevents heat-shock induction of these operons. This Clostridium botulinum (strain Alaska E43 / Type E3) protein is Heat-inducible transcription repressor HrcA.